Reading from the N-terminus, the 396-residue chain is MQLLDNLDAALRKLDAQHLRRRRRTAESPCAPHVRVDGRDMLAFCSNDYLGLAAHPVIVAALAEGAARYGAGSGASHLISGHSHAHAQLEERLANMLAPHLEQPRALYFCTGYMANLAVLGALAGRDADIFSEALNHASLIDGARLSRARVQVYPHADLDALADMLAASRAQTRLIVSDGVFSMDGDIAPLRDLLALAERHGAWLVVDDAHGFGVLGEHGRGVLEHAGLRSPHLVLMGTLGKAAGVAGAFVAAHATVIDWLVNRARPYIFSTAAAPAQAHALMASLNLIEGSEGRQRRARLQALAQQLQARLSLRQWRHQPTPTAIQPIVLGANAHALRAAAGLESQGLWVPAIRPPTVPPGTARLRVTLSASHIPAHVDRLADALNQLDNEACHA.

Substrate is bound at residue Arg21. Pyridoxal 5'-phosphate is bound at residue 112–113 (GY). Substrate is bound at residue His137. Pyridoxal 5'-phosphate is bound by residues Ser183, His211, and Thr239. An N6-(pyridoxal phosphate)lysine modification is found at Lys242. Position 358 (Thr358) interacts with substrate.

This sequence belongs to the class-II pyridoxal-phosphate-dependent aminotransferase family. BioF subfamily. In terms of assembly, homodimer. Pyridoxal 5'-phosphate is required as a cofactor.

It catalyses the reaction 6-carboxyhexanoyl-[ACP] + L-alanine + H(+) = (8S)-8-amino-7-oxononanoate + holo-[ACP] + CO2. It functions in the pathway cofactor biosynthesis; biotin biosynthesis. In terms of biological role, catalyzes the decarboxylative condensation of pimeloyl-[acyl-carrier protein] and L-alanine to produce 8-amino-7-oxononanoate (AON), [acyl-carrier protein], and carbon dioxide. This Bordetella petrii (strain ATCC BAA-461 / DSM 12804 / CCUG 43448) protein is 8-amino-7-oxononanoate synthase.